Reading from the N-terminus, the 308-residue chain is Electron transfer flavoprotein subunit alpha (308 aa).

Position 252 to 280 (252 to 280) interacts with FAD; that stretch reads LYVAVGISGAIQHLAGMKDSKVIVAINKD.

This sequence belongs to the ETF alpha-subunit/FixB family. In terms of assembly, heterodimer of an alpha and a beta subunit. Requires FAD as cofactor.

The electron transfer flavoprotein serves as a specific electron acceptor for other dehydrogenases. It transfers the electrons to the main respiratory chain via ETF-ubiquinone oxidoreductase (ETF dehydrogenase). The sequence is that of Electron transfer flavoprotein subunit alpha (etfA) from Paracoccus denitrificans.